Here is a 383-residue protein sequence, read N- to C-terminus: Glucose-1-phosphate adenylyltransferase (383 aa).

Alpha-D-glucose 1-phosphate-binding positions include tyrosine 100, glycine 165, 180–181, and serine 191; that span reads EK.

It belongs to the bacterial/plant glucose-1-phosphate adenylyltransferase family. As to quaternary structure, homotetramer.

It carries out the reaction alpha-D-glucose 1-phosphate + ATP + H(+) = ADP-alpha-D-glucose + diphosphate. It functions in the pathway glycan biosynthesis; glycogen biosynthesis. Involved in the biosynthesis of ADP-glucose, a building block required for the elongation reactions to produce glycogen. Catalyzes the reaction between ATP and alpha-D-glucose 1-phosphate (G1P) to produce pyrophosphate and ADP-Glc. The polypeptide is Glucose-1-phosphate adenylyltransferase (Clostridium kluyveri (strain ATCC 8527 / DSM 555 / NBRC 12016 / NCIMB 10680 / K1)).